The following is a 574-amino-acid chain: Multidrug and toxin extrusion protein 1 (574 aa).

Residues 1 to 51 (MEGQAAETNHRAETVVRAELCLSAEQGPETTAYSQKRCLFLPMEVWQEAQQ) are Cytoplasmic-facing. The chain crosses the membrane as a helical span at residues 52–72 (LLALAAPAFLSQLMIFLISIV). Residues 73–86 (SSIFCGHLGKVELD) lie on the Extracellular side of the membrane. Residues 87-107 (AVSLAITIINITGVAVGTGLA) traverse the membrane as a helical segment. Residues 108 to 133 (GACDTLISQTFGGSNLKLVGIILQRG) lie on the Cytoplasmic side of the membrane. The helical transmembrane segment at 134 to 154 (ILILLLFCFPCWALLINTESI) threads the bilayer. Residues 155–168 (LLLFRQDPEVSKLT) are Extracellular-facing. Residues 169–189 (QIYVLIFLPALPAAFLYQLLA) traverse the membrane as a helical segment. Residues 190 to 204 (KYLQNQGIIYPQVLT) are Cytoplasmic-facing. The chain crosses the membrane as a helical span at residues 205-225 (GFIANIFNALFNYILLYVLGL). The Extracellular portion of the chain corresponds to 226 to 230 (GVMGS). Residues 231–251 (ACANTVSQFIQMILLFLYIVW) form a helical membrane-spanning segment. The Cytoplasmic portion of the chain corresponds to 252 to 271 (RRLYADTWGGWSQACFEEWG). A helical transmembrane segment spans residues 272–291 (AFIRLAVASMLMLCIEWWAF). The Extracellular portion of the chain corresponds to 292 to 309 (EISMFLAGVLGMVDLAAQ). Residues 310-330 (AIIYQVAIVVYLIPLGLCIAG) form a helical membrane-spanning segment. Residues 331–350 (SIRVGHGLGAGNTEQAKRSA) are Cytoplasmic-facing. The helical transmembrane segment at 351 to 371 (LVVLCMTELCALLSGILLATL) threads the bilayer. At 372-384 (KDVVAYIFTSDPN) the chain is on the extracellular side. The chain crosses the membrane as a helical span at residues 385–405 (IVALVSYVLPVYSACLLFDAC). At 406 to 430 (VAACGGILRGSGKLKVGAISHTVGY) the chain is on the cytoplasmic side. A helical transmembrane segment spans residues 431–451 (YVIGLPLGISLMFAAKLGIIG). Over 452–453 (FW) the chain is Extracellular. The chain crosses the membrane as a helical span at residues 454-472 (FGILACGIAQSIFLIIFVF). Over 473–549 (KIDWKRASEE…AGAAQHTRTL (77 aa)) the chain is Cytoplasmic. The interval 500–541 (KPSVYQEGCPTEQGDVDPGNVESIEFSQSSTSSEGTSPTPAG) is disordered. The span at 521 to 538 (ESIEFSQSSTSSEGTSPT) shows a compositional bias: low complexity. Residues 550–570 (ILTRGLALGCAVGTLIIGIVI) traverse the membrane as a helical segment. The Extracellular segment spans residues 571–574 (RLSV).

The protein belongs to the multi antimicrobial extrusion (MATE) (TC 2.A.66.1) family.

It is found in the cell membrane. The protein localises to the apical cell membrane. The catalysed reaction is thiamine(out) + H(+)(in) = thiamine(in) + H(+)(out). The enzyme catalyses estrone 3-sulfate(in) + H(+)(out) = estrone 3-sulfate(out) + H(+)(in). It carries out the reaction creatinine(in) + H(+)(out) = creatinine(out) + H(+)(in). It catalyses the reaction agmatine(in) + H(+)(out) = agmatine(out) + H(+)(in). Multidrug efflux pump that functions as a H(+)/organic cation antiporter. Mediates the secretion of cationic compounds including drugs, toxins and endogenous metabolites. Plays a role physiological role in the excretion of drugs, toxins and endogenous metabolites through the kidney and liver, into urine and bile respectively. The chain is Multidrug and toxin extrusion protein 1 (slc47a1) from Xenopus tropicalis (Western clawed frog).